Consider the following 305-residue polypeptide: Nucleotide-binding protein Mjls_2437 (305 aa).

28 to 35 is an ATP binding site; the sequence is GLSGAGRG. Residue 79 to 82 coordinates GTP; sequence DVRS.

Belongs to the RapZ-like family.

In terms of biological role, displays ATPase and GTPase activities. The protein is Nucleotide-binding protein Mjls_2437 of Mycobacterium sp. (strain JLS).